Here is a 165-residue protein sequence, read N- to C-terminus: Protein SprT (165 aa).

The SprT-like domain maps to 10–157; it reads EACYRQAEDF…YCRRCKATLV (148 aa). His-69 lines the Zn(2+) pocket. Glu-70 is an active-site residue. Zn(2+) is bound at residue His-73.

It belongs to the SprT family. The cofactor is Zn(2+).

Its subcellular location is the cytoplasm. The chain is Protein SprT from Pseudomonas paraeruginosa (strain DSM 24068 / PA7) (Pseudomonas aeruginosa (strain PA7)).